A 383-amino-acid chain; its full sequence is MAKTIKHPRWGRYVAEAVGRGHPDKICDQIADSILDECIKQSPTSHVACEVFASKNLIMVGGEILTTGYVDVVQTGWKVLNRLGYTENDFSFLSCINSQSSEINQAVQSNDEIGAGDQGITVGYACSETEQLMPLGSIVAQALVQRAARIIDQYPFIKHDMKSQVVLNYTGNKVQCESVLMSVQHTQDVSLDQLRQTIINQVILPVLTEYGLNDPKIKHLVNPGGSFVVGGPMADTGLTGRKIIVDTYGPYANHGGGSFSGKDPTKVDRTGAYFARFIAKHIVSLGWAEECEVSISWVFSQPLPQSIQVKCFNINKEFSEQLINQVISQYFNWSVAKIIAKLKLLDQVEYFRYAVYGHFGHQTAPWEQLSERDSLQCLIKNFQ.

Residue His-22 participates in ATP binding. Asp-24 contributes to the Mg(2+) binding site. Glu-50 is a binding site for K(+). The L-methionine site is built by Glu-63 and Gln-99. The flexible loop stretch occupies residues 99–109; the sequence is QSSEINQAVQS. Residues 160-162, Asp-235, 241-242, Ser-258, and Lys-262 contribute to the ATP site; these read DMK and RK. Asp-235 contributes to the L-methionine binding site. Position 266 (Lys-266) interacts with L-methionine.

The protein belongs to the AdoMet synthase family. Homotetramer; dimer of dimers. Mg(2+) serves as cofactor. It depends on K(+) as a cofactor.

The protein localises to the cytoplasm. It carries out the reaction L-methionine + ATP + H2O = S-adenosyl-L-methionine + phosphate + diphosphate. It functions in the pathway amino-acid biosynthesis; S-adenosyl-L-methionine biosynthesis; S-adenosyl-L-methionine from L-methionine: step 1/1. Its function is as follows. Catalyzes the formation of S-adenosylmethionine (AdoMet) from methionine and ATP. The overall synthetic reaction is composed of two sequential steps, AdoMet formation and the subsequent tripolyphosphate hydrolysis which occurs prior to release of AdoMet from the enzyme. This chain is S-adenosylmethionine synthase, found in Mycoplasma pneumoniae (strain ATCC 29342 / M129 / Subtype 1) (Mycoplasmoides pneumoniae).